The chain runs to 87 residues: U3-theraphotoxin-Hhn1a 2 (87 aa).

The first 24 residues, 1 to 24, serve as a signal peptide directing secretion; it reads MVNMKASMFLTFAGLVLLFVVCYA. Residues 25 to 52 constitute a propeptide that is removed on maturation; that stretch reads SESEEKEFPKEMLSSIFAVDDDFKQEER. Disulfide bonds link cysteine 54-cysteine 67, cysteine 61-cysteine 72, and cysteine 66-cysteine 79.

Belongs to the neurotoxin 10 (Hwtx-1) family. 51 (Hntx-8) subfamily. Hntx-8 sub-subfamily. As to expression, expressed by the venom gland.

Its subcellular location is the secreted. Its function is as follows. Ion channel inhibitor. This is U3-theraphotoxin-Hhn1a 2 from Cyriopagopus hainanus (Chinese bird spider).